We begin with the raw amino-acid sequence, 213 residues long: MPEQYQESMTGTTTVGLVFAGGVILATEKRATMGYMIASKRAKKVYQIADRIGMTIAGGVGDAQQLARIITVECNLYQIRRSREITVGAASTLLSNYLNQNRYFPYYVQLLVGGIDDHGPSVYSVDAMGGATKEEDIVSTGSGSPMAYGVLEDRYRPGMNEDEAVELAVRALRSAMKRDAGSGEGIHVVVITKDRYENVSEETIKKHLAKTIA.

A propeptide spans 1–11 (MPEQYQESMTG) (removed in mature form; by autocatalysis). Threonine 12 serves as the catalytic Nucleophile.

It belongs to the peptidase T1B family. In terms of assembly, the 20S proteasome core is composed of 14 alpha and 14 beta subunits that assemble into four stacked heptameric rings, resulting in a barrel-shaped structure. The two inner rings, each composed of seven catalytic beta subunits, are sandwiched by two outer rings, each composed of seven alpha subunits. The catalytic chamber with the active sites is on the inside of the barrel. Has a gated structure, the ends of the cylinder being occluded by the N-termini of the alpha-subunits. Is capped at one or both ends by the proteasome regulatory ATPase, PAN.

The protein resides in the cytoplasm. It catalyses the reaction Cleavage of peptide bonds with very broad specificity.. With respect to regulation, the formation of the proteasomal ATPase PAN-20S proteasome complex, via the docking of the C-termini of PAN into the intersubunit pockets in the alpha-rings, triggers opening of the gate for substrate entry. Interconversion between the open-gate and close-gate conformations leads to a dynamic regulation of the 20S proteasome proteolysis activity. Functionally, component of the proteasome core, a large protease complex with broad specificity involved in protein degradation. This is Proteasome subunit beta from Methanoregula boonei (strain DSM 21154 / JCM 14090 / 6A8).